We begin with the raw amino-acid sequence, 377 residues long: Transmembrane protein 237A (377 aa).

Composition is skewed to basic and acidic residues over residues 1–11 (MCVTSRADKMP), 43–64 (LESRRQSESREPLTPEPHDNPP), and 74–87 (HTFENEGEQQDHPN). The segment at 1–124 (MCVTSRADKM…NQSHNELGVE (124 aa)) is disordered. Transmembrane regions (helical) follow at residues 198–218 (IIGLFSHGFLAGYAVWNIIVV), 239–259 (LAYPAQSLLYLLLAISTVSAF), 273–293 (GFLTLDPAALASFLYFAALIL), and 326–346 (PWIVVNLVVALLVGLAWVFVA).

It belongs to the TMEM237 family.

Its subcellular location is the membrane. It localises to the cell projection. The protein resides in the cilium. Functionally, component of the transition zone in primary cilia. Required for ciliogenesis. The protein is Transmembrane protein 237A (tmem237a) of Danio rerio (Zebrafish).